The following is a 518-amino-acid chain: Vesicular inhibitory amino acid transporter (518 aa).

Over 1 to 125 (MATLIRSKLS…WNVTNAIQGM (125 aa)) the chain is Cytoplasmic. A helical transmembrane segment spans residues 126-146 (FVLGLPYAILHGGYLGLFLII). The Lumenal, vesicle segment spans residues 147-197 (FAAVVCCYTGKILIACLYEENEDGETVRVRDSYVDIANACCAPRFPKLGGR). A helical transmembrane segment spans residues 198-218 (VVNVAQIIELVMTCILYVVVS). Topologically, residues 219-258 (GNLMYNSFPNLPISQKSWSIMATAVLLPCAFLKNLKAVSK) are cytoplasmic. A helical transmembrane segment spans residues 259 to 279 (FSLLCTVAHFVINILVIAYCL). The Lumenal, vesicle segment spans residues 280–298 (SRARDWAWDKVKFYIDVKK). The chain crosses the membrane as a helical span at residues 299 to 319 (FPISIGIIVFSYTSQIFLPSL). Residues 320-334 (EGNMQSPREFHCMMN) are Cytoplasmic-facing. The chain crosses the membrane as a helical span at residues 335-355 (WTHIAACILKGLFALVAYLTW). Residues 356-376 (ADETKEVITDNLPSTIRAVVN) are Lumenal, vesicle-facing. A helical transmembrane segment spans residues 377 to 397 (LFLVSKALLSYPLPFFAAVEV). The Cytoplasmic portion of the chain corresponds to 398-431 (LEKSLFQEGARAFFPNCYGGDGRLKSWGLTLRCA). The chain crosses the membrane as a helical span at residues 432–452 (LVVFTLLMAIYVPHFALLMGL). Topologically, residues 453-454 (TG) are lumenal, vesicle. Residues 455 to 475 (SLTGAGLCFLLPSLFHLKLMW) traverse the membrane as a helical segment. Residues 476–482 (RQLLWHQ) are Cytoplasmic-facing. The helical transmembrane segment at 483–503 (VFFDVSIFVIGSICSVSGFVH) threads the bilayer. Over 504 to 518 (SLEGLIEAYAYNIED) the chain is Lumenal, vesicle.

Belongs to the amino acid/polyamine transporter 2 family. Initially expressed in late neurula stages in the anterior spinal cord. By early tailbud stages, expression extends posteriorly along the entire developing spinal cord and appears in the hindbrain. In late tailbud embryos, expressed in the forebrain, midbrain, hindbrain, spinal cord and retina. In swimming tadpoles, expressed in an extended and more intense pattern including interneurons.

The protein resides in the cytoplasmic vesicle membrane. It localises to the presynapse. The enzyme catalyses 4-aminobutanoate(out) + n H(+)(in) = 4-aminobutanoate(in) + n H(+)(out). It catalyses the reaction glycine(out) + n H(+)(in) = glycine(in) + n H(+)(out). It carries out the reaction beta-alanine(out) + n H(+)(in) = beta-alanine(in) + n H(+)(out). In terms of biological role, antiporter that exchanges vesicular protons for cytosolic 4-aminobutanoate or to a lesser extend glycine, thus allowing their secretion from nerve terminals. The transport is equally dependent on the chemical and electrical components of the proton gradient. May also transport beta-alanine. Acidification of GABAergic synaptic vesicles is a prerequisite for 4-aminobutanoate uptake. The sequence is that of Vesicular inhibitory amino acid transporter from Xenopus laevis (African clawed frog).